The primary structure comprises 231 residues: 3-oxoadipate CoA-transferase subunit A (231 aa).

Position 25–31 (25–31) interacts with CoA; it reads GGFGTAG.

The protein belongs to the 3-oxoacid CoA-transferase subunit A family. In terms of assembly, heterodimer.

The enzyme catalyses 3-oxoadipate + succinyl-CoA = 3-oxoadipyl-CoA + succinate. It participates in aromatic compound metabolism; beta-ketoadipate pathway; acetyl-CoA and succinyl-CoA from 3-oxoadipate: step 1/2. The protein is 3-oxoadipate CoA-transferase subunit A (pcaI) of Pseudomonas putida (Arthrobacter siderocapsulatus).